Reading from the N-terminus, the 471-residue chain is tRNA-2-methylthio-N(6)-dimethylallyladenosine synthase (471 aa).

The MTTase N-terminal domain maps to 29–146 (KKFHIKTYGC…LPELIAKVNR (118 aa)). 6 residues coordinate [4Fe-4S] cluster: Cys38, Cys74, Cys109, Cys187, Cys191, and Cys194. Residues 173–405 (RVPQSSAFLS…QQLLKEKQLE (233 aa)) enclose the Radical SAM core domain. The TRAM domain occupies 408-467 (KKMIGKTVTVLFDKKHPDKISGRTEYMQQVFSDDSNLLDKIVTMRVEDASTFTLKCTAED).

The protein belongs to the methylthiotransferase family. MiaB subfamily. In terms of assembly, monomer. Requires [4Fe-4S] cluster as cofactor.

It localises to the cytoplasm. The catalysed reaction is N(6)-dimethylallyladenosine(37) in tRNA + (sulfur carrier)-SH + AH2 + 2 S-adenosyl-L-methionine = 2-methylsulfanyl-N(6)-dimethylallyladenosine(37) in tRNA + (sulfur carrier)-H + 5'-deoxyadenosine + L-methionine + A + S-adenosyl-L-homocysteine + 2 H(+). Functionally, catalyzes the methylthiolation of N6-(dimethylallyl)adenosine (i(6)A), leading to the formation of 2-methylthio-N6-(dimethylallyl)adenosine (ms(2)i(6)A) at position 37 in tRNAs that read codons beginning with uridine. The protein is tRNA-2-methylthio-N(6)-dimethylallyladenosine synthase of Neorickettsia sennetsu (strain ATCC VR-367 / Miyayama) (Ehrlichia sennetsu).